The chain runs to 409 residues: Potassium channel subfamily K member 3 (409 aa).

The Cytoplasmic portion of the chain corresponds to 1-8 (MKRQNVRT). Residues 9-29 (LALIVCTFTYLLVGAAVFDAL) traverse the membrane as a helical segment. Asn53 is a glycosylation site (N-linked (GlcNAc...) asparagine). Positions 78–101 (WRFAGSFYFAITVITTIGYGHAAP) form an intramembrane region, pore-forming. Residues 108–128 (VFCMFYALLGIPLTLVMFQSL) form a helical membrane-spanning segment. At 129–158 (GERINTFVRYLLHRAKRGLGMRHAEVSMAN) the chain is on the cytoplasmic side. The chain crosses the membrane as a helical span at residues 159–179 (MVLIGFVSCISTLCIGAAAFS). An intramembrane region (pore-forming) is located at residues 184–207 (WTFFQAYYYCFITLTTIGFGDYVA). The chain crosses the membrane as a helical span at residues 223 to 243 (FSFVYILTGLTVIGAFLNLVV). At 244–409 (LRFMTMNAED…RGLMKRRSSV (166 aa)) the chain is on the cytoplasmic side.

This sequence belongs to the two pore domain potassium channel (TC 1.A.1.8) family. Homodimer. Heterodimer with KCNK1. Heterodimer with KCNK9. Very strong expression in heart, also detected in kidney, brain, skin, testis, lung, skeletal muscle, small intestine and stomach. Not detected in liver, thymus or spleen. Expressed in adrenal glands mainly in zona glomerulosa and zona fasciculata of the cortex. Expressed at higher levels in brown and beige than in white adipocytes.

The protein resides in the cell membrane. It catalyses the reaction K(+)(in) = K(+)(out). The enzyme catalyses Na(+)(in) = Na(+)(out). Its activity is regulated as follows. Activated by halothane and isoflurane. Inhibited by external acidification, diacylglycerol and anandamide. Inactivated by barium. In terms of biological role, k(+) channel that conducts voltage-dependent outward rectifying currents upon membrane depolarization. Voltage sensing is coupled to K(+) electrochemical gradient in an 'ion flux gating' mode where outward but not inward ion flow opens the gate. Changes ion selectivity and becomes permeable to Na(+) ions in response to extracellular acidification. Protonation of the pH sensor His-98 stabilizes C-type inactivation conformation likely converting the channel from outward K(+)-conducting, to inward Na(+)-conducting to nonconductive state. Homo- and heterodimerizes to form functional channels with distinct regulatory and gating properties. Allows K(+) currents with fast-gating kinetics important for the repolarization and hyperpolarization phases of action potentials. In cerebellar granule cells, heteromeric KCNK3:KCNK9 channel may hyperpolarize the resting membrane potential to limit intrinsic neuronal excitability, but once the action potential threshold is reached, it may support high-frequency action potential firing and increased neuronal excitability. Dispensable for central chemosensory respiration i.e. breathing controlled by brainstem CO2/pH, it rather conducts pH-sensitive currents and controls the firing rate of serotonergic raphe neurons involved in potentiation of the respiratory chemoreflex. Additionally, imparts chemosensitivity to type 1 cells in carotid bodies which respond to a decrease in arterial oxygen pressure or an increase in carbon dioxide pressure or pH to initiate adaptive changes in pulmonary ventilation. In adrenal gland, contributes to the maintenance of a hyperpolarized resting membrane potential of aldosterone-producing cells at zona glomerulosa and limits aldosterone release as part of a regulatory mechanism that controls arterial blood pressure and electrolyte homeostasis. In brown adipocytes, mediates K(+) efflux that counteracts norepinephrine-induced membrane depolarization, limits Ca(2+) efflux and downstream cAMP and PKA signaling, ultimately attenuating lipid oxidation and adaptive thermogenesis. The protein is Potassium channel subfamily K member 3 of Mus musculus (Mouse).